The chain runs to 290 residues: Membrane protein insertase YidC 2 (290 aa).

The signal sequence occupies residues 1–19 (MKKKALLPLFLGIMIFLAG). A lipid anchor (N-palmitoyl cysteine) is attached at Cys20. Cys20 carries S-diacylglycerol cysteine lipidation. The next 5 helical transmembrane spans lie at 56-76 (FGLAIIVLVLFIRLILLPFML), 134-154 (MLGCLPILIQMPIIMGLYFVL), 176-196 (PDIWITVIAGVLYFIQAVVSS), 211-231 (MVISPIMIIWISLQASSALGL), and 232-252 (YWSVSALFLVIQTHFANIYYS). A disordered region spans residues 266 to 290 (YEREHNPSSKKKGKNTQVVSKKNKK). Positions 280–290 (NTQVVSKKNKK) are enriched in polar residues.

The protein belongs to the OXA1/ALB3/YidC family. Type 2 subfamily.

It is found in the cell membrane. Its function is as follows. Required for the insertion and/or proper folding and/or complex formation of integral membrane proteins into the membrane. Involved in integration of membrane proteins that insert both dependently and independently of the Sec translocase complex, as well as at least some lipoproteins. This is Membrane protein insertase YidC 2 from Staphylococcus epidermidis (strain ATCC 35984 / DSM 28319 / BCRC 17069 / CCUG 31568 / BM 3577 / RP62A).